A 416-amino-acid chain; its full sequence is D-amino acid dehydrogenase (416 aa).

Residue 3 to 17 (VIVLGAGIIGVTSAY) participates in FAD binding.

It belongs to the DadA oxidoreductase family. It depends on FAD as a cofactor.

The enzyme catalyses a D-alpha-amino acid + A + H2O = a 2-oxocarboxylate + AH2 + NH4(+). It participates in amino-acid degradation; D-alanine degradation; NH(3) and pyruvate from D-alanine: step 1/1. Oxidative deamination of D-amino acids. This is D-amino acid dehydrogenase from Sinorhizobium medicae (strain WSM419) (Ensifer medicae).